A 613-amino-acid polypeptide reads, in one-letter code: Chaperone protein dnaK (613 aa).

This sequence belongs to the heat shock protein 70 family.

The protein resides in the plastid. It localises to the chloroplast. In terms of biological role, acts as a chaperone. The polypeptide is Chaperone protein dnaK (Phaeodactylum tricornutum (strain CCAP 1055/1)).